Here is a 149-residue protein sequence, read N- to C-terminus: UPF0179 protein Hlac_2319 (149 aa).

This sequence belongs to the UPF0179 family.

This chain is UPF0179 protein Hlac_2319, found in Halorubrum lacusprofundi (strain ATCC 49239 / DSM 5036 / JCM 8891 / ACAM 34).